Consider the following 262-residue polypeptide: Sulfur carrier protein FdhD (262 aa).

C107 (cysteine persulfide intermediate) is an active-site residue.

This sequence belongs to the FdhD family.

It localises to the cytoplasm. Its function is as follows. Required for formate dehydrogenase (FDH) activity. Acts as a sulfur carrier protein that transfers sulfur from IscS to the molybdenum cofactor prior to its insertion into FDH. The protein is Sulfur carrier protein FdhD of Bacillus subtilis (strain 168).